The chain runs to 148 residues: uncharacterized protein (148 aa).

Residues 25 to 148 (LSIGLIFSLI…YSITNIFIYN (124 aa)) enclose the ABC transmembrane type-1 domain. A run of 3 helical transmembrane segments spans residues 26 to 46 (SIGLIFSLIGTSFSLYIPLII), 60 to 80 (IVIIIICFGLTLIFSGVSTYI), and 127 to 147 (ITRVFSVEFIFSYSITNIFIY).

It localises to the cell membrane. This is an uncharacterized protein from Staphylococcus epidermidis.